Reading from the N-terminus, the 359-residue chain is MNEPSPSDWHLDAYDYELPPDRIAQSAVEPRDHARLSVFPDREQLWHRHFYDLPQLLRPGDLLIVNDTRVIPARLYGQKIETGVPVEVLLVEEHGPGYWLTLVKPGKRLKPGSAIAFGPNPEDPLLVADVEASDPATGGRWLRFRGEAEAFWSQLATLGEMPLPPYIHTTASDPERYQTVYSRELGAVAAPTAGLHFTPELLTTLADMGIATAPVTLHVGIGTFRSVDVEDIRQHEMHSERMMVPAATVEKIQATKAAGGRVIAVGTTSVRAIEGAAASGELKPGSDRVNLFIYPGYRWQIIDGLITNFHLPRSSLMMLVSALIGRDRLLSAYATAIAEQYRFYSFGDAMLILPDAKLP.

Belongs to the QueA family. In terms of assembly, monomer.

Its subcellular location is the cytoplasm. The enzyme catalyses 7-aminomethyl-7-carbaguanosine(34) in tRNA + S-adenosyl-L-methionine = epoxyqueuosine(34) in tRNA + adenine + L-methionine + 2 H(+). It functions in the pathway tRNA modification; tRNA-queuosine biosynthesis. In terms of biological role, transfers and isomerizes the ribose moiety from AdoMet to the 7-aminomethyl group of 7-deazaguanine (preQ1-tRNA) to give epoxyqueuosine (oQ-tRNA). The protein is S-adenosylmethionine:tRNA ribosyltransferase-isomerase of Synechococcus sp. (strain ATCC 27144 / PCC 6301 / SAUG 1402/1) (Anacystis nidulans).